The sequence spans 388 residues: Oxytocin receptor (388 aa).

The disordered stretch occupies residues 1–32 (MEGTPAANWSVELDLGSGVPPGEEGNRTAGPP). Residues 1–38 (MEGTPAANWSVELDLGSGVPPGEEGNRTAGPPQRNEAL) are Extracellular-facing. Residues N8 and N26 are each glycosylated (N-linked (GlcNAc...) asparagine). The helical transmembrane segment at 39–63 (ARVEVAVLCLILFLALSGNACVLLA) threads the bilayer. The Cytoplasmic segment spans residues 64-74 (LRTTRHKHSRL). Residues 75–97 (FFFMKHLSIADLVVAVFQVLPQL) form a helical membrane-spanning segment. The Extracellular portion of the chain corresponds to 98-113 (LWDITFRFYGPDLLCR). A disulfide bridge links C112 with C187. Residues 114–135 (LVKYLQVVGMFASTYLLLLMSL) traverse the membrane as a helical segment. At 136–154 (DRCLAICQPLRSLRRRTDR) the chain is on the cytoplasmic side. The helical transmembrane segment at 155 to 175 (LAVLGTWLGCLVASAPQVHIF) threads the bilayer. Residues 176–202 (SLREVADGVFDCWAVFIQPWGPKAYVT) lie on the Extracellular side of the membrane. Residues 203–225 (WITLAVYIVPVIVLAACYGLISF) traverse the membrane as a helical segment. The Cytoplasmic portion of the chain corresponds to 226–274 (KIWQNLRLKTAAAAAAAEGNDAAGGAGRAALARVSSVKLISKAKIRTVK). A helical transmembrane segment spans residues 275 to 293 (MTFIIVLAFIVCWTPFFFV). Topologically, residues 294–308 (QMWSVWDVNAPKEAS) are extracellular. The chain crosses the membrane as a helical span at residues 309 to 331 (AFIIAMLLASLNSCCNPWIYMLF). Topologically, residues 332–388 (TGHLFHELVQRFFCCSARYLKGSRPGETSVSKKSNSSTFVLSRRSSSQRSCSQPSSA) are cytoplasmic. A disordered region spans residues 354 to 388 (SRPGETSVSKKSNSSTFVLSRRSSSQRSCSQPSSA). Residues S365 and S367 each carry the phosphoserine modification. The span at 365 to 388 (SNSSTFVLSRRSSSQRSCSQPSSA) shows a compositional bias: low complexity.

It belongs to the G-protein coupled receptor 1 family. Vasopressin/oxytocin receptor subfamily.

Its subcellular location is the cell membrane. In terms of biological role, receptor for oxytocin. The activity of this receptor is mediated by G proteins which activate a phosphatidylinositol-calcium second messenger system. This is Oxytocin receptor (Oxtr) from Rattus norvegicus (Rat).